Consider the following 963-residue polypeptide: Kinesin-1 heavy chain (963 aa).

N-acetylalanine is present on Ala-2. The 318-residue stretch at 8–325 (NIKVMCRFRP…LLFGQRAKTI (318 aa)) folds into the Kinesin motor domain. An ATP-binding site is contributed by 85-92 (GQTSSGKT). A Glycyl lysine isopeptide (Lys-Gly) (interchain with G-Cter in SUMO2) cross-link involves residue Lys-213. Residues 329 to 914 (VCVNVELTAE…AVRSKNMARR (586 aa)) are a coiled coil. A disordered region spans residues 908–963 (SKNMARRGHSAQIAKPIRPGQHPAASPTHPGTVRGGGSFVQNNQPVGLRGGGGKQS). A globular region spans residues 915-963 (GHSAQIAKPIRPGQHPAASPTHPGTVRGGGSFVQNNQPVGLRGGGGKQS). Phosphoserine is present on residues Ser-933 and Ser-945. Omega-N-methylarginine is present on Arg-956.

The protein belongs to the TRAFAC class myosin-kinesin ATPase superfamily. Kinesin family. Kinesin subfamily. In terms of assembly, oligomer composed of two heavy chains and two light chains. Interacts with GRIP1 and PPP1R42. Interacts with SYBU. Interacts with JAKMIP1. Interacts with PLEKHM2. Interacts with ECPAS. Interacts with ZFYVE27. Found in a complex with OGT, RHOT1, RHOT2 and TRAK1. Interacts with APP (via cytoplasmic domain).

Its subcellular location is the cytoplasm. The protein resides in the cytoskeleton. It is found in the cytolytic granule membrane. It localises to the lysosome membrane. In terms of biological role, microtubule-dependent motor required for normal distribution of mitochondria and lysosomes. May be involved in the mechanisms of growth arrest induced by exposure to DNA-damaging drugs or by cellular senescence. Can induce formation of neurite-like membrane protrusions in non-neuronal cells in a ZFYVE27-dependent manner. Regulates centrosome and nuclear positioning during mitotic entry. During the G2 phase of the cell cycle in a BICD2-dependent manner, antagonizes dynein function and drives the separation of nuclei and centrosomes. Required for anterograde axonal transportation of MAPK8IP3/JIP3 which is essential for MAPK8IP3/JIP3 function in axon elongation. Through binding with PLEKHM2 and ARL8B, directs lysosome movement toward microtubule plus ends. Involved in NK cell-mediated cytotoxicity. Drives the polarization of cytolytic granules and microtubule-organizing centers (MTOCs) toward the immune synapse between effector NK lymphocytes and target cells. This Mus musculus (Mouse) protein is Kinesin-1 heavy chain (Kif5b).